The sequence spans 203 residues: Outer-membrane lipoprotein LolB (203 aa).

The N-terminal stretch at 1-21 (MRLSASLFHIALVTVLLVLAG) is a signal peptide. C22 is lipidated: N-palmitoyl cysteine. Residue C22 is the site of S-diacylglycerol cysteine attachment.

Belongs to the LolB family. In terms of assembly, monomer.

The protein resides in the cell outer membrane. Functionally, plays a critical role in the incorporation of lipoproteins in the outer membrane after they are released by the LolA protein. In Shewanella frigidimarina (strain NCIMB 400), this protein is Outer-membrane lipoprotein LolB.